The chain runs to 415 residues: Type II methyltransferase M.DdeI (415 aa).

In terms of domain architecture, SAM-dependent MTase C5-type spans 1–373; sequence MNIIDLFAGC…ERISWYFENI (373 aa). Residue C76 is part of the active site.

It belongs to the class I-like SAM-binding methyltransferase superfamily. C5-methyltransferase family.

The enzyme catalyses a 2'-deoxycytidine in DNA + S-adenosyl-L-methionine = a 5-methyl-2'-deoxycytidine in DNA + S-adenosyl-L-homocysteine + H(+). Its function is as follows. A methylase that recognizes the double-stranded sequence 5'-CTNAG-3', methylates C-1 on both strands, and protects the DNA from cleavage by the DdeI endonuclease. The sequence is that of Type II methyltransferase M.DdeI (ddeIM) from Desulfomicrobium norvegicum (strain DSM 1741 / NCIMB 8310) (Desulfovibrio baculatus (strain Norway 4)).